We begin with the raw amino-acid sequence, 87 residues long: Small ribosomal subunit protein uS17 (87 aa).

The protein belongs to the universal ribosomal protein uS17 family. As to quaternary structure, part of the 30S ribosomal subunit.

Its function is as follows. One of the primary rRNA binding proteins, it binds specifically to the 5'-end of 16S ribosomal RNA. The chain is Small ribosomal subunit protein uS17 from Staphylococcus haemolyticus (strain JCSC1435).